The sequence spans 153 residues: MQLHNLYPFPEERKTRRRVGRGSGSGLGCTAGKGHKGQNARAGGGVAPGFEGGQMPLQRRLPKHGFKNAPFKVTYDVINLDRLLEAFEGKDTITLDDIYARGLARMGAPVKILSRGEVKSALKVEAHKFSQTAAEKIRGAGGEVSELEAVPAA.

The tract at residues 1–49 (MQLHNLYPFPEERKTRRRVGRGSGSGLGCTAGKGHKGQNARAGGGVAPG) is disordered. The segment covering 21 to 31 (RGSGSGLGCTA) has biased composition (gly residues).

This sequence belongs to the universal ribosomal protein uL15 family. As to quaternary structure, part of the 50S ribosomal subunit.

In terms of biological role, binds to the 23S rRNA. The protein is Large ribosomal subunit protein uL15 of Desulfovibrio desulfuricans (strain ATCC 27774 / DSM 6949 / MB).